The chain runs to 727 residues: Prolyl endopeptidase-like (727 aa).

Active-site charge relay system residues include Ser559, Asp645, and His690.

Belongs to the peptidase S9A family. Homodimer. Interacts with the AP-1 complex.

The protein resides in the cytoplasm. Its subcellular location is the cytosol. The protein localises to the golgi apparatus. It localises to the trans-Golgi network. It is found in the cytoskeleton. The protein resides in the nucleus. Functionally, serine peptidase whose precise substrate specificity remains unclear. Does not cleave peptides after a arginine or lysine residue. Regulates trans-Golgi network morphology and sorting by regulating the membrane binding of the AP-1 complex. May play a role in the regulation of synaptic vesicle exocytosis. In Macaca fascicularis (Crab-eating macaque), this protein is Prolyl endopeptidase-like (PREPL).